Consider the following 140-residue polypeptide: Large ribosomal subunit protein bL17 (140 aa).

Belongs to the bacterial ribosomal protein bL17 family. In terms of assembly, part of the 50S ribosomal subunit. Contacts protein L32.

The chain is Large ribosomal subunit protein bL17 from Hyphomonas neptunium (strain ATCC 15444).